A 1090-amino-acid polypeptide reads, in one-letter code: Leucine-rich repeat receptor-like serine/threonine-protein kinase RGI4 (1090 aa).

Residues 1-20 (MPRNPRFCFFLFLLFHSSLF) form the signal peptide. Topologically, residues 21–702 (FSIPCFSIDE…IQTRHRSAVK (682 aa)) are extracellular. The LRR 1 repeat unit spans residues 36 to 59 (LSWKSQLNISGDALSSWKASESNP). Residue Asn-43 is glycosylated (N-linked (GlcNAc...) asparagine). Residues Cys-60 and Cys-67 are joined by a disulfide bond. LRR repeat units follow at residues 95-119 (IKSL…LGDL), 120-143 (SELE…IFKL), 145-166 (KLKI…ELGN), and 168-191 (VNLI…IGEL). N-linked (GlcNAc...) asparagine glycosylation is present at Asn-107. 4 consecutive short sequence motifs (small peptide recognition) follow at residues 176-177 (FD), 198-201 (RAGG), 221-226 (TLGLAE), and Tyr-249. LRR repeat units follow at residues 216-240 (CESL…IGNL), 242-264 (KVQT…IGNC), 265-288 (TELQ…MGRL), 289-312 (KKLQ…LGTC), 314-335 (ELFL…SFGN), 336-360 (LPNL…LANC), and 362-386 (KLTH…KLTS). Asn-263 carries an N-linked (GlcNAc...) asparagine glycan. The CLE45 peptide binding signature appears at 269-273 (NLYLY). The Small peptide recognition motif lies at 271-273 (YLY). 2 short sequence motifs (small peptide recognition) span residues 319-322 (DLSE) and 341-343 (ELQ). An N-linked (GlcNAc...) asparagine glycan is attached at Asn-359. 2 short sequence motifs (small peptide recognition) span residues 389–393 (MFFAW) and 415–418 (DLSY). LRR repeat units lie at residues 408–432 (CQEL…IFEI), 434–456 (NLTK…IGNC), 457–480 (TNLY…IGNL), 481–504 (KNLN…ISGC), 506–526 (SLEF…GTLP), 527–550 (KSLQ…IGSL), 551–574 (TELT…ISSC), 576–598 (SLQL…LGRI), 600–622 (SLAI…RFSS), 623–646 (LTNL…LADL), and 647–670 (QNLV…LFFR). N-linked (GlcNAc...) asparagine glycans are attached at residues Asn-420 and Asn-434. The short motif at 437 to 441 (KLLLL) is the Small peptide recognition element. Asn-455 carries an N-linked (GlcNAc...) asparagine glycan. Residues 461–463 (RLR) carry the Small peptide recognition motif. Asn-606 is a glycosylation site (N-linked (GlcNAc...) asparagine). Residue Asn-653 is glycosylated (N-linked (GlcNAc...) asparagine). Residues 703–723 (VTMSILVAASVVLVLMAVYTL) traverse the membrane as a helical segment. Residues 724–1090 (VKAQRITGKQ…CSFAYSDESV (367 aa)) lie on the Cytoplasmic side of the membrane. The Protein kinase domain maps to 758 to 1040 (LTSANVIGTG…KDIVAMLKEI (283 aa)). ATP contacts are provided by residues 764–772 (IGTGSSGVV) and Lys-786. 2 positions are modified to phosphotyrosine: Tyr-829 and Tyr-869. Asp-882 serves as the catalytic Proton acceptor. Tyr-932 is modified (phosphotyrosine). The stretch at 1037-1060 (LKEIRQFDMDRSESDMIKGGKCEK) is one LRR 24 repeat. A disordered region spans residues 1054 to 1079 (KGGKCEKWQPQPLPPEKIVSTPRGSS).

It belongs to the protein kinase superfamily. Ser/Thr protein kinase family. Self-interacts. Interacts with RGF1; this interaction triggers its phosphorylation and ubiquitination and the formation of heterodimers with SERK1. Autophosphorylated. Post-translationally, phosphorylated and ubiquitinated upon interaction with RGF1, thus leading to activation a subsequent degradation. As to expression, expressed in floers, pollen grains and stipules. Present in roots.

The protein localises to the cell membrane. It carries out the reaction L-seryl-[protein] + ATP = O-phospho-L-seryl-[protein] + ADP + H(+). The catalysed reaction is L-threonyl-[protein] + ATP = O-phospho-L-threonyl-[protein] + ADP + H(+). Functionally, receptor with a serine/threonine-protein kinase activity. Together with SKM1, LRR-rich receptor-like kinase (LRR-RLK) required for male fertility by the perception of CLE43 and CLE45 peptides and the transduction of their promoting action in pollen tubes, especially under relatively high temperature (at 30 degrees Celsius), thus conferring tolerance against high temperature probably through the maintenance of mitochondrial activity. Seems to not be involved in the perception of CLE45 peptide in roots. Together with RGI1, RGI2, RGI3, RGI4 and RGI5, acts as receptor of RGF1, a peptide hormone that maintains the postembryonic root stem cell niche by regulating the expression levels and patterns of the transcription factor PLETHORA (PLT). Links RGF1 signal with its downstream components. This chain is Leucine-rich repeat receptor-like serine/threonine-protein kinase RGI4, found in Arabidopsis thaliana (Mouse-ear cress).